A 370-amino-acid polypeptide reads, in one-letter code: Chorismate synthase (370 aa).

Arg-47 serves as a coordination point for NADP(+). FMN-binding positions include 124–126, Gly-286, 301–305, and Arg-327; these read RSS and KPTAT.

This sequence belongs to the chorismate synthase family. As to quaternary structure, homotetramer. It depends on FMNH2 as a cofactor.

It carries out the reaction 5-O-(1-carboxyvinyl)-3-phosphoshikimate = chorismate + phosphate. It participates in metabolic intermediate biosynthesis; chorismate biosynthesis; chorismate from D-erythrose 4-phosphate and phosphoenolpyruvate: step 7/7. Functionally, catalyzes the anti-1,4-elimination of the C-3 phosphate and the C-6 proR hydrogen from 5-enolpyruvylshikimate-3-phosphate (EPSP) to yield chorismate, which is the branch point compound that serves as the starting substrate for the three terminal pathways of aromatic amino acid biosynthesis. This reaction introduces a second double bond into the aromatic ring system. This chain is Chorismate synthase, found in Trichodesmium erythraeum (strain IMS101).